The following is a 428-amino-acid chain: Chaperone SurA (428 aa).

The signal sequence occupies residues 1 to 20; sequence MKNWKTLLLGIAMIANTSFA. 2 PpiC domains span residues 171–272 and 282–382; these read STEL…KVND and VTEV…ELLD.

It localises to the periplasm. The catalysed reaction is [protein]-peptidylproline (omega=180) = [protein]-peptidylproline (omega=0). Functionally, chaperone involved in the correct folding and assembly of outer membrane proteins. Recognizes specific patterns of aromatic residues and the orientation of their side chains, which are found more frequently in integral outer membrane proteins. May act in both early periplasmic and late outer membrane-associated steps of protein maturation. This is Chaperone SurA from Salmonella choleraesuis (strain SC-B67).